A 517-amino-acid chain; its full sequence is Serine O-succinyltransferase (517 aa).

A mitochondrion-targeting transit peptide spans 1 to 46 (MSPLNGVARSLPRPFQAVARRPFRVAQPAVACPSNRRSFNHSRSLR). The segment at 34–66 (SNRRSFNHSRSLRSTGSQSPAPSPRDSSNPALS) is disordered. Over residues 45–64 (LRSTGSQSPAPSPRDSSNPA) the composition is skewed to polar residues. The 253-residue stretch at 134–386 (NVILLHTGLS…LTQQLATKKQ (253 aa)) folds into the AB hydrolase-1 domain. The segment at 141–144 (GLSA) is important for substrate specificity. Ser-238 functions as the Nucleophile in the catalytic mechanism. Arg-307 lines the substrate pocket. Positions 413-436 (QPYQEQPSASTSAEQSASASETGS) are disordered. Residues 416–436 (QEQPSASTSAEQSASASETGS) are compositionally biased toward low complexity. Active-site residues include Asp-461 and His-498. Asp-499 is a substrate binding site.

It belongs to the AB hydrolase superfamily. MetX family.

The protein resides in the mitochondrion. The catalysed reaction is succinyl-CoA + L-serine = O-succinyl-L-serine + CoA. It participates in amino-acid biosynthesis; L-cysteine biosynthesis; L-cysteine from L-serine: step 1/2. Its function is as follows. Transfers a succinyl group from succinyl-CoA to L-serine, forming succinyl-L-serine. Also has weak serine acetyl transferase activity and homoserine succinyl transferase activity. The sequence is that of Serine O-succinyltransferase from Emericella nidulans (Aspergillus nidulans).